The sequence spans 245 residues: MEVMVGSSFGIGMAAYVRDHRGVSAQDKAVQTALFLADESGRGGSQIGIGLRMSNNNNKSPEESSDSSSSIGESSENEEEEEEDDAVSCQRGTLDSFSSSLEDSLPIKRGLSNHYVGKSKSFGNLMEAASKAKDLEKVENPFNKRRRLVIANKLRRRGRSMSASNFYSWQNPNSMPLLALQEPNEEDHHIHNDDYEDDDGDGDDHRKIMMMMKNKKELMAQTRSCFCLSSLQEEDDGDGDDDEDE.

Positions 46 to 90 (QIGIGLRMSNNNNKSPEESSDSSSSIGESSENEEEEEEDDAVSCQ) are disordered. Over residues 75 to 86 (SENEEEEEEDDA) the composition is skewed to acidic residues. Positions 143 to 151 (NKRRRLVIA) match the Nuclear localization signal motif. The segment at 203 to 230 (DDHRKIMMMMKNKKELMAQTRSCFCLSS) is kinase-inducible domain (KID).

The protein resides in the nucleus. Functionally, probable transcription factor. Promotes slightly the tolerance to cadmium (Cd) and to oxidizing chemicals (e.g. diamide). The chain is Protein OXIDATIVE STRESS 3 LIKE 6 from Arabidopsis thaliana (Mouse-ear cress).